The sequence spans 273 residues: 4-hydroxy-3-methylbut-2-enyl diphosphate reductase (273 aa).

Cysteine 12 contributes to the [4Fe-4S] cluster binding site. Histidine 36 and histidine 70 together coordinate (2E)-4-hydroxy-3-methylbut-2-enyl diphosphate. The dimethylallyl diphosphate site is built by histidine 36 and histidine 70. The isopentenyl diphosphate site is built by histidine 36 and histidine 70. A [4Fe-4S] cluster-binding site is contributed by cysteine 92. Residue histidine 120 coordinates (2E)-4-hydroxy-3-methylbut-2-enyl diphosphate. Histidine 120 provides a ligand contact to dimethylallyl diphosphate. Histidine 120 contacts isopentenyl diphosphate. Residue glutamate 122 is the Proton donor of the active site. Threonine 157 lines the (2E)-4-hydroxy-3-methylbut-2-enyl diphosphate pocket. Cysteine 185 is a [4Fe-4S] cluster binding site. The (2E)-4-hydroxy-3-methylbut-2-enyl diphosphate site is built by serine 213, serine 214, asparagine 215, and serine 257. Serine 213, serine 214, asparagine 215, and serine 257 together coordinate dimethylallyl diphosphate. Positions 213, 214, 215, and 257 each coordinate isopentenyl diphosphate.

This sequence belongs to the IspH family. Requires [4Fe-4S] cluster as cofactor.

It catalyses the reaction isopentenyl diphosphate + 2 oxidized [2Fe-2S]-[ferredoxin] + H2O = (2E)-4-hydroxy-3-methylbut-2-enyl diphosphate + 2 reduced [2Fe-2S]-[ferredoxin] + 2 H(+). The catalysed reaction is dimethylallyl diphosphate + 2 oxidized [2Fe-2S]-[ferredoxin] + H2O = (2E)-4-hydroxy-3-methylbut-2-enyl diphosphate + 2 reduced [2Fe-2S]-[ferredoxin] + 2 H(+). The protein operates within isoprenoid biosynthesis; dimethylallyl diphosphate biosynthesis; dimethylallyl diphosphate from (2E)-4-hydroxy-3-methylbutenyl diphosphate: step 1/1. It participates in isoprenoid biosynthesis; isopentenyl diphosphate biosynthesis via DXP pathway; isopentenyl diphosphate from 1-deoxy-D-xylulose 5-phosphate: step 6/6. Catalyzes the conversion of 1-hydroxy-2-methyl-2-(E)-butenyl 4-diphosphate (HMBPP) into a mixture of isopentenyl diphosphate (IPP) and dimethylallyl diphosphate (DMAPP). Acts in the terminal step of the DOXP/MEP pathway for isoprenoid precursor biosynthesis. The chain is 4-hydroxy-3-methylbut-2-enyl diphosphate reductase from Helicobacter hepaticus (strain ATCC 51449 / 3B1).